Consider the following 514-residue polypeptide: Cytochrome P450 monooxygenase FUS8 (514 aa).

Residues 24-44 traverse the membrane as a helical segment; sequence VFENLTVTNTVCAFIALFIIV. N-linked (GlcNAc...) asparagine glycans are attached at residues Asn-225 and Asn-443. Position 460 (Cys-460) interacts with heme.

This sequence belongs to the cytochrome P450 family. It depends on heme as a cofactor.

Its subcellular location is the membrane. The protein operates within mycotoxin biosynthesis. Cytochrome P450 monooxygenase; part of the gene cluster that mediates the biosynthesis of the mycotoxin fusarin C. Within the cluster, FUS1, FUS2, FUS8 and FUS9 are sufficient for fusarin production. The roles of the other FUS members are yet undetermined. The fusarin C synthetase FUS1 is responsible for the condensation of one acetyl-coenzyme A (CoA) unit with six malonyl-CoA units and the amide linkage of the arising heptaketide and homoserine, subsequently releasing the first intermediate, prefusarin, as an alcohol with an open ring structure. The cytochrome P450 monooxygenase FUS8 participates in multiple oxidation processes at carbon C-20 and is able to use the FUS1 product as substrate, resulting in formation of 20-hydroxy-prefusarin. This reaction seems to be essential before the 2-pyrrolidone ring closure can be catalyzed by FUS2, generating 20-hydroxy-fusarin. FUS8 is able to further oxidizes carbon C-20 after ring closure, resulting in the formation of carboxy-fusarin C. As the last step, FUS9 methylates the hydroxyl group at C-21 to generate fusarin C. Fusarin C can then rearrange to epi-fusarin C, the (z)-isomers, and fusarin A and fusarin D. The protein is Cytochrome P450 monooxygenase FUS8 of Gibberella fujikuroi (strain CBS 195.34 / IMI 58289 / NRRL A-6831) (Bakanae and foot rot disease fungus).